Here is a 675-residue protein sequence, read N- to C-terminus: Myosin-binding protein 3 (675 aa).

Residues 17–37 traverse the membrane as a helical segment; sequence ITVILVYAFLEWLLMFFIFLN. Disordered stretches follow at residues 225 to 274 and 286 to 315; these read LRSI…EEET and SKNFTGSQIEEEEEDREETTKELDPETPTS. Residues 238–251 show a composition bias toward basic and acidic residues; sequence AKSRVSEDEQRNDD. The region spanning 355 to 453 is the GTD-binding domain; it reads RTIERLRETV…QLQRELEVYR (99 aa). Over residues 474–496 the composition is skewed to acidic residues; the sequence is CEADDDDKEEENREEDNSSEMDV. 3 disordered regions span residues 474 to 497, 542 to 565, and 582 to 605; these read CEADDDDKEEENREEDNSSEMDVD, DKESAEDPGEFSNSYEEASNGHGG, and AENESEDGSQGLPESDEKNFGSDS. The segment covering 596–605 has biased composition (basic and acidic residues); that stretch reads SDEKNFGSDS. Residues 605–633 are a coiled coil; sequence SEKLEIIKQVDSVYERLQELETDGEFLKN.

As to quaternary structure, interacts with myosin XI-K.

It localises to the membrane. Membrane-anchored myosin receptors that define a distinct, plant-specific transport vesicle compartment. In Arabidopsis thaliana (Mouse-ear cress), this protein is Myosin-binding protein 3.